A 473-amino-acid chain; its full sequence is NAC domain-containing protein 68 (473 aa).

The 151-residue stretch at 4–154 (GLIGYRFSPT…KYVVCQVKYK (151 aa)) folds into the NAC domain. Residues 108 to 160 (IGIKKTLVYHEGKSPHGVRTPWVMHEYHITCLPHHKRKYVVCQVKYKGEAAEI) mediate DNA binding. The interval 326–380 (DHMPRKPVTGTIDYSSDSGSDAGSISTTSYQGTSSPNISVGSSSRHLSSCSSTDS) is disordered. Low complexity-rich tracts occupy residues 340–354 (SSDSGSDAGSISTTS) and 364–379 (SVGSSSRHLSSCSSTD). Residues 446-468 (FIYLMKMIIGNIISVLLPVKRLI) traverse the membrane as a helical segment.

Its subcellular location is the membrane. It localises to the nucleus. Functionally, transcription activator activated by proteolytic cleavage through regulated intramembrane proteolysis (RIP) mediated by calpain or its functional homolog. Regulates cytokinin signaling during cell division. The polypeptide is NAC domain-containing protein 68 (NAC68) (Arabidopsis thaliana (Mouse-ear cress)).